Consider the following 118-residue polypeptide: Elongin-B (118 aa).

Residue M1 is modified to N-acetylmethionine. Residues 1 to 66 (MDVFLMIRRH…LGECGFTSQT (66 aa)) enclose the Ubiquitin-like domain. T84 bears the Phosphothreonine mark. Residues 92–118 (PFSSPPELPDVMKPQDSGSSANEQAVQ) form a disordered region. Residues 107 to 118 (DSGSSANEQAVQ) show a composition bias toward polar residues. S108 and S111 each carry phosphoserine.

This sequence belongs to the Elongin B family. As to quaternary structure, heterotrimer of an A (ELOA, ELOA2 or ELOA3P), ELOB and ELOC subunit. The elongin BC complex interacts with EPOP; leading to recruit the elongin BC complex to Polycomb group (PcG) target genes, thereby restricting excessive activity of the PRC2/EED-EZH2 complex. Component of multiple cullin-RING E3 ubiquitin-protein ligase complexes composed of Elongin BC (ELOB and ELOC), a cullin (either CUL2 or CUL5), a catalytic subunit (either RBX1 or RNF7/RBX2), as well as a substrate adapter protein that can be either ASB2, ASB9, ASB11, KLHDC2, KLHDC3, KLHDC10, APPBP2, FEM1A, FEM1B, FEM1C, LRR1, PCMTD1, SOCS1, SOCS2, SOCS5, SPSB1, SPSB3, ELOA, VHL, WSB1 or RAB40C. As part of the Elongin BC E3 ubiquitin ligase complex; interacts with NRBP1. May also interact with DCUN1D1, DCUN1D2, DCUN1D3 and DCUN1D5. May form oligomers as a KLHDC2/KLHDC3-ELOB-ELOC complex; this interaction is autoinhibitory for the E3 ligase complex as the substrate-binding site of KLHDC2/KLHDC3 is blocked in the oligomer. (Microbial infection) Following infection by HIV-1 virus, component of a cullin-5-RING E3 ubiquitin-protein ligase complex (ECS complex) hijacked by the HIV-1 Vif protein. In terms of assembly, (Microbial infection) Substrate adapter protein can be a viral protein such as HIV Vif. As to quaternary structure, (Microbial infection) Interacts with molluscum contagiosum virus MC132. (Microbial infection) Interacts with herpes virus 8 virus protein LANA1.

It is found in the nucleus. It functions in the pathway protein modification; protein ubiquitination. In terms of biological role, SIII, also known as elongin, is a general transcription elongation factor that increases the RNA polymerase II transcription elongation past template-encoded arresting sites. Subunit A is transcriptionally active and its transcription activity is strongly enhanced by binding to the dimeric complex of the SIII regulatory subunits B and C (elongin BC complex). In embryonic stem cells, the elongin BC complex is recruited by EPOP to Polycomb group (PcG) target genes in order generate genomic region that display both active and repressive chromatin properties, an important feature of pluripotent stem cells. Core component of multiple cullin-2 and cullin-5-RING E3 ubiquitin-protein ligase complexes (ECS complexes), which mediate the ubiquitination of target proteins. By binding to BC-box motifs it seems to link target recruitment subunits, like VHL and members of the SOCS box family, to Cullin/RBX1 modules that activate E2 ubiquitination enzymes. Component the von Hippel-Lindau ubiquitination complex CBC(VHL). A number of ECS complexes (containing either KLHDC2, KLHDC3, KLHDC10, APPBP2, FEM1A, FEM1B or FEM1C as substrate-recognition component) are part of the DesCEND (destruction via C-end degrons) pathway, which recognizes a C-degron located at the extreme C terminus of target proteins, leading to their ubiquitination and degradation. The ECS(ASB9) complex mediates ubiquitination and degradation of CKB. As part of a multisubunit ubiquitin ligase complex, polyubiquitinates monoubiquitinated POLR2A. ECS(LRR1) ubiquitinates MCM7 and promotes CMG replisome disassembly by VCP and chromatin extraction during S-phase. As part of the ECS(RAB40C) complex, mediates ANKRD28 ubiquitination and degradation, thereby inhibiting protein phosphatase 6 (PP6) complex activity and focal adhesion assembly during cell migration. Functionally, (Microbial infection) Following infection by HIV-1 virus, component of a cullin-5-RING E3 ubiquitin-protein ligase complex (ECS complex) hijacked by the HIV-1 Vif protein, which catalyzes ubiquitination and degradation of APOBEC3F and APOBEC3G. The complex can also ubiquitinate APOBEC3H to some extent. The chain is Elongin-B from Homo sapiens (Human).